A 447-amino-acid chain; its full sequence is MPPSAAKQMGASTGVHAGVTDSSAFTRKDVADRPDLTIVGDSVYDAKAFRSEHPGGAHFVSLFGGRDATEAFMEYHRRAWPKSRMSRFHVGSLASTEEPVAADEGYLQLCARIAKMVPSVSSGFAPASYWVKAGLILGSAIALEAYMLYAGKRLLPSIVLGWLFALIGLNIQHDANHGALSKSASVNLALGLCQDWIGGSMILWLQEHVVMHHLHTNDVDKDPDQKAHGALRLKPTDAWSPMHWLQHLYLLPGETMYAFKLLFLDISELVMWRWEGEPISKLAGYLFMPSLLLKLTFWARFVALPLYLAPSVHTAVCIAATVMTGSFYLAFFFFISHNFEGVASVGPDGSITSMTRGASFLKRQAETSSNVGGPLLATLNGGLNYQIEHHLFPRVHHGFYPRLAPLVKAELEARGIEYKHYPTIWSNLASTLRHMYALGRRPRSKAE.

The 59-residue stretch at leucine 36–alanine 94 folds into the Cytochrome b5 heme-binding domain. Heme is bound by residues histidine 53 and histidine 76. The next 3 helical transmembrane spans lie at glycine 123–leucine 143, leucine 154–aspartate 174, and serine 185–leucine 205. The short motif at histidine 173 to histidine 177 is the Histidine box-1 element. The short motif at histidine 208–histidine 213 is the Histidine box-2 element. Transmembrane regions (helical) follow at residues tryptophan 244–leucine 264, leucine 286–leucine 306, and alanine 315–isoleucine 335. A Histidine box-3 motif is present at residues glutamine 386–histidine 390.

This sequence belongs to the fatty acid desaturase type 1 family. Fe(2+) is required as a cofactor.

It is found in the membrane. It carries out the reaction a (7Z,10Z,13Z,16Z,19Z)-docosapentaenoyl-containing glycerolipid + 2 Fe(II)-[cytochrome b5] + O2 + 2 H(+) = a (4Z,7Z,10Z,13Z,16Z,19Z)-docosahexaenoyl-containing glycerolipid + 2 Fe(III)-[cytochrome b5] + 2 H2O. The catalysed reaction is a (7Z,10Z,13Z,16Z)-docosatetraenoyl-containing glycerolipid + 2 Fe(II)-[cytochrome b5] + O2 + 2 H(+) = a (4Z,7Z,10Z,13Z,16Z)-docosapentaenoyl-containing glycerolipid + 2 Fe(III)-[cytochrome b5] + 2 H2O. Functionally, fatty acid desaturase that introduces a cis double bond at the 4-position in 22-carbon polyunsaturated fatty acids that contain a Delta(7) double bond, resulting in the production of delta-4 desaturated fatty acid docosahexanoic acid (DHA). The protein is Acyl-lipid (7-3)-desaturase of Rebecca salina (Marine microalga).